The following is a 60-amino-acid chain: Single-pass membrane and coiled-coil domain-containing protein 4 homolog (60 aa).

Residues 1-22 (MRKLRGGQTRETRKQKQERREE) form a disordered region. The segment covering 8-22 (QTRETRKQKQERREE) has biased composition (basic and acidic residues). The stretch at 8–34 (QTRETRKQKQERREENQKIQQQLKTIV) forms a coiled coil. The chain crosses the membrane as a helical span at residues 30 to 50 (LKTIVLPICGVVFLCIVAYVF).

It belongs to the SMCO4 family.

It is found in the membrane. The chain is Single-pass membrane and coiled-coil domain-containing protein 4 homolog from Culex quinquefasciatus (Southern house mosquito).